We begin with the raw amino-acid sequence, 213 residues long: Carboxysome shell protein CcmP (213 aa).

BMC circularly permuted domains are found at residues 4 to 106 (ELRS…RLKP) and 107 to 211 (KIVS…GDRS). The short motif at 69–70 (ER) is the Probably important for pore gating element.

It belongs to the EutL/PduB family. A dimer of stacked trimers, the same faces interact.

Its subcellular location is the carboxysome. Its function is as follows. Probably part of the carboxysome shell, a polyhedral inclusion where RuBisCO (ribulose bisphosphate carboxylase, rbcL-rbcS) is sequestered. It is thought that this protein controls transport of RuBisCO reactants in and out of the carboxysome; residual densities in the 4 X-ray structures suggest that differing compounds bind in interior pockets, depending on the open or closed state of the pore. This is Carboxysome shell protein CcmP from Synechococcus elongatus (strain ATCC 33912 / PCC 7942 / FACHB-805) (Anacystis nidulans R2).